A 131-amino-acid chain; its full sequence is MDKLQKTLEEWKQMLDPEQYNVCRLKGTERPFSGKYDKVKTDGIYHCICCDEPLFDSTTKFDSGCGWPSFYAPLENSAVIEVRDMSHGMIRTEVVCAKCDAHLGHVFPDGPPPTGLRYCINSVCLDLVPRS.

One can recognise a MsrB domain in the interval 8 to 130; that stretch reads LEEWKQMLDP…NSVCLDLVPR (123 aa). Positions 47, 50, 96, and 99 each coordinate Zn(2+). C119 serves as the catalytic Nucleophile.

This sequence belongs to the MsrB Met sulfoxide reductase family. Zn(2+) is required as a cofactor.

The enzyme catalyses L-methionyl-[protein] + [thioredoxin]-disulfide + H2O = L-methionyl-(R)-S-oxide-[protein] + [thioredoxin]-dithiol. This is Peptide methionine sulfoxide reductase MsrB from Pseudomonas syringae pv. syringae (strain B728a).